The following is a 213-amino-acid chain: ATP phosphoribosyltransferase (213 aa).

The protein belongs to the ATP phosphoribosyltransferase family. Short subfamily. As to quaternary structure, heteromultimer composed of HisG and HisZ subunits.

It is found in the cytoplasm. The enzyme catalyses 1-(5-phospho-beta-D-ribosyl)-ATP + diphosphate = 5-phospho-alpha-D-ribose 1-diphosphate + ATP. It functions in the pathway amino-acid biosynthesis; L-histidine biosynthesis; L-histidine from 5-phospho-alpha-D-ribose 1-diphosphate: step 1/9. In terms of biological role, catalyzes the condensation of ATP and 5-phosphoribose 1-diphosphate to form N'-(5'-phosphoribosyl)-ATP (PR-ATP). Has a crucial role in the pathway because the rate of histidine biosynthesis seems to be controlled primarily by regulation of HisG enzymatic activity. This chain is ATP phosphoribosyltransferase, found in Nitrosococcus oceani (strain ATCC 19707 / BCRC 17464 / JCM 30415 / NCIMB 11848 / C-107).